The following is a 375-amino-acid chain: MAKQNFVRSKPHINVGAIGHVDHGKTTLTAALTMYGAKKHGGKVMNYDDIDNAPEEKERGITINTRHVEYESAARHYAHVDCPGHADYVKNMITGAAQMDGAILLVAADSGPEPQTREHILLAKQVGVANLVIFLNKMDLADPELVELVEMEVRDLLNLYGFDGEKTPFIRGSAFAAMSKPDDPAATKCLDELLDTMDKYFVIPERALDKPFLMPIEDVFSISGRGTVVTGAIAQGKVKVGDTVEIVGIKPTQTTVVTGVEMFNKLLDAGQAGDNIGALLRGIEKNQVERGQVLAAPKSITPHTNFKATIYCLSKEEGGRHNPFFSGYRPQFYFRTTDVTGTVTLPEGKQMVMPGDNTELVVELITPMDKGSRFA.

The tr-type G domain maps to 10 to 205 (KPHINVGAIG…TMDKYFVIPE (196 aa)). The segment at 19–26 (GHVDHGKT) is G1. Residue 19-26 (GHVDHGKT) participates in GTP binding. Residue Thr-26 participates in Mg(2+) binding. Residues 60-64 (GITIN) form a G2 region. Residues 81–84 (DCPG) are G3. Residues 81–85 (DCPGH) and 136–139 (NKMD) each bind GTP. The tract at residues 136 to 139 (NKMD) is G4. A G5 region spans residues 173 to 175 (SAF).

The protein belongs to the TRAFAC class translation factor GTPase superfamily. Classic translation factor GTPase family. EF-Tu/EF-1A subfamily. Monomer.

The protein resides in the cytoplasm. It carries out the reaction GTP + H2O = GDP + phosphate + H(+). GTP hydrolase that promotes the GTP-dependent binding of aminoacyl-tRNA to the A-site of ribosomes during protein biosynthesis. The polypeptide is Elongation factor Tu (tuf) (Spirochaeta aurantia).